A 198-amino-acid polypeptide reads, in one-letter code: Dual specificity protein phosphatase 1 (198 aa).

Residues 1–20 (MSSRDRGSPSSSSSSSSLPG) form a disordered region. Positions 8–17 (SPSSSSSSSS) are enriched in low complexity. Residues 26 to 47 (EKVKNQIQALVRVIKVARTYRD) form a caM binding domain 1 region. The 142-residue stretch at 50–191 (VPSLIEQGLY…LQDLEKSMQV (142 aa)) folds into the Tyrosine-protein phosphatase domain. C135 serves as the catalytic Phosphocysteine intermediate. The interval 151–180 (MKKHGMTLAQALQHVKSKRPVASPNAGFIR) is caM binding domain 2.

It belongs to the protein-tyrosine phosphatase family. Non-receptor class dual specificity subfamily. In terms of assembly, interacts with calmodulin (CaM) in a calcium Ca(2+)-dependent manner. Expressed in roots, stems, leaves and flowers.

The protein localises to the nucleus. Its subcellular location is the cytoplasm. The catalysed reaction is O-phospho-L-tyrosyl-[protein] + H2O = L-tyrosyl-[protein] + phosphate. The enzyme catalyses O-phospho-L-seryl-[protein] + H2O = L-seryl-[protein] + phosphate. It catalyses the reaction O-phospho-L-threonyl-[protein] + H2O = L-threonyl-[protein] + phosphate. Inhibited by sodium vanadate and sodium tungstate. NaF and spermifine repress specifically phosphoserine and phosphothreonine phosphatase activity. Has a dual specificity toward Ser/Thr and Tyr-containing proteins. Dephosphorylates MPK4 in vitro. The protein is Dual specificity protein phosphatase 1 (DSPTP1) of Arabidopsis thaliana (Mouse-ear cress).